The sequence spans 130 residues: uncharacterized protein (130 aa).

Residues 41-64 are disordered; that stretch reads DDKDDHMDNQPKTSQTSKKVKLSE.

This is an uncharacterized protein from Streptococcus pyogenes serotype M6 (strain ATCC BAA-946 / MGAS10394).